The primary structure comprises 376 residues: GDSL esterase/lipase At5g55050 (376 aa).

The N-terminal stretch at 1 to 29 (MPTNNTPFLTIFLLFLGLLRFDSFPGLEA) is a signal peptide. Catalysis depends on S46, which acts as the Nucleophile. 2 N-linked (GlcNAc...) asparagine glycosylation sites follow: N134 and N245. Residues D340 and H344 contribute to the active site.

Belongs to the 'GDSL' lipolytic enzyme family.

Its subcellular location is the secreted. In Arabidopsis thaliana (Mouse-ear cress), this protein is GDSL esterase/lipase At5g55050.